The chain runs to 867 residues: Inactive tyrosine-protein kinase kin-32 (867 aa).

The FERM domain maps to 3-327; that stretch reads GLARVFLIGG…GYQMLYNQRD (325 aa). The Protein kinase domain maps to 367-631; sequence ITLKELIGGG…IIEDVRQQII (265 aa). Residues 373–381 and K400 each bind ATP; that span reads IGGGQFGNV. Residues 662-691 adopt a coiled-coil conformation; that stretch reads TLYRTMEDQKRQAEEDAKWLEQEDDEDEDD. The segment at 674-729 is disordered; the sequence is AEEDAKWLEQEDDEDEDDQDIDQIPSTSHSSVENIRTSNGYLHHTPTSTRSLRFED. A compositionally biased stretch (acidic residues) spans 683 to 694; that stretch reads QEDDEDEDDQDI. Residues 698 to 724 are compositionally biased toward polar residues; that stretch reads PSTSHSSVENIRTSNGYLHHTPTSTRS.

Belongs to the protein kinase superfamily. Tyr protein kinase family. FAK subfamily. Expressed in body wall muscles and some neurons in the head.

In terms of biological role, has apparently no tyrosine kinase activity in vitro when expressed in mammalian cells. In Caenorhabditis elegans, this protein is Inactive tyrosine-protein kinase kin-32.